Reading from the N-terminus, the 251-residue chain is Triosephosphate isomerase (251 aa).

Asn-9–Lys-11 contributes to the substrate binding site. The Electrophile role is filled by His-95. The active-site Proton acceptor is the Glu-167. Residues Gly-173, Ser-212, and Gly-233–Gly-234 contribute to the substrate site.

This sequence belongs to the triosephosphate isomerase family. In terms of assembly, homodimer.

Its subcellular location is the cytoplasm. It catalyses the reaction D-glyceraldehyde 3-phosphate = dihydroxyacetone phosphate. It participates in carbohydrate biosynthesis; gluconeogenesis. Its pathway is carbohydrate degradation; glycolysis; D-glyceraldehyde 3-phosphate from glycerone phosphate: step 1/1. Functionally, involved in the gluconeogenesis. Catalyzes stereospecifically the conversion of dihydroxyacetone phosphate (DHAP) to D-glyceraldehyde-3-phosphate (G3P). The chain is Triosephosphate isomerase from Pseudomonas syringae pv. syringae (strain B728a).